Here is a 286-residue protein sequence, read N- to C-terminus: Putative quercetin 2,3-dioxygenase PA2418 (286 aa).

Residues histidine 61, histidine 63, histidine 105, and glutamate 107 each contribute to the a divalent metal cation site.

This sequence belongs to the pirin family. A divalent metal cation is required as a cofactor.

The catalysed reaction is quercetin + O2 = 2-(3,4-dihydroxybenzoyloxy)-4,6-dihydroxybenzoate + CO. It participates in flavonoid metabolism; quercetin degradation. Putative quercetin 2,3-dioxygenase. The chain is Putative quercetin 2,3-dioxygenase PA2418 from Pseudomonas aeruginosa (strain ATCC 15692 / DSM 22644 / CIP 104116 / JCM 14847 / LMG 12228 / 1C / PRS 101 / PAO1).